We begin with the raw amino-acid sequence, 241 residues long: Adapter protein MecA (241 aa).

The disordered stretch occupies residues 77–102 (KNTDEDDVADESQGDASVDSEHPDQV). Positions 80-89 (DEDDVADESQ) are enriched in acidic residues.

The protein belongs to the MecA family. In terms of assembly, homodimer.

Enables the recognition and targeting of unfolded and aggregated proteins to the ClpC protease or to other proteins involved in proteolysis. This chain is Adapter protein MecA, found in Levilactobacillus brevis (strain ATCC 367 / BCRC 12310 / CIP 105137 / JCM 1170 / LMG 11437 / NCIMB 947 / NCTC 947) (Lactobacillus brevis).